A 100-amino-acid polypeptide reads, in one-letter code: Urease subunit gamma (100 aa).

It belongs to the urease gamma subunit family. Heterotrimer of UreA (gamma), UreB (beta) and UreC (alpha) subunits. Three heterotrimers associate to form the active enzyme.

The protein localises to the cytoplasm. It carries out the reaction urea + 2 H2O + H(+) = hydrogencarbonate + 2 NH4(+). It functions in the pathway nitrogen metabolism; urea degradation; CO(2) and NH(3) from urea (urease route): step 1/1. The polypeptide is Urease subunit gamma (Dinoroseobacter shibae (strain DSM 16493 / NCIMB 14021 / DFL 12)).